An 82-amino-acid chain; its full sequence is DNA-directed RNA polymerase subunit omega (82 aa).

The protein belongs to the RNA polymerase subunit omega family. As to quaternary structure, in cyanobacteria the RNAP catalytic core is composed of 2 alpha, 1 beta, 1 beta', 1 gamma and 1 omega subunit. When a sigma factor is associated with the core the holoenzyme is formed, which can initiate transcription.

It carries out the reaction RNA(n) + a ribonucleoside 5'-triphosphate = RNA(n+1) + diphosphate. Its function is as follows. Promotes RNA polymerase assembly. Latches the N- and C-terminal regions of the beta' subunit thereby facilitating its interaction with the beta and alpha subunits. The sequence is that of DNA-directed RNA polymerase subunit omega from Trichodesmium erythraeum (strain IMS101).